A 79-amino-acid chain; its full sequence is UPF0349 protein BCE33L4669 (79 aa).

Belongs to the UPF0349 family.

The sequence is that of UPF0349 protein BCE33L4669 from Bacillus cereus (strain ZK / E33L).